The following is a 144-amino-acid chain: Transcriptional regulator SlyA (144 aa).

The 134-residue stretch at 2 to 135 folds into the HTH marR-type domain; that stretch reads ESPLGSDLAR…LIKLVAKLEH (134 aa). The segment at residues 49–72 is a DNA-binding region (H-T-H motif); that stretch reads QIQLAKAIGIEQPSLVRTLDQLED.

This sequence belongs to the SlyA family. Homodimer.

Functionally, transcription regulator that can specifically activate or repress expression of target genes. Required to activate expression of virulent genes. The sequence is that of Transcriptional regulator SlyA from Salmonella choleraesuis (strain SC-B67).